The primary structure comprises 215 residues: MDIKVVNHPLVRARLTIMRDARSNNVVFRDALADLGAMLIYEASNDLETESFDVETPVSTAEGHRLKNPPIIVPIIRAGLGMIDPALSMIPDAQVGFIGLARDEKTHEPVPYLEALPDDLSGQPVMLVDPMLATGGSLLNAVELLVEHGADDITCVCMVSAQPGVDKLVNSGLPVRKLVTATIDPALDENAYIDPGLGDAGDRLYGPRNIDLESR.

5-phospho-alpha-D-ribose 1-diphosphate-binding positions include Arg-77, Arg-102, and 129–137; that span reads DPMLATGGS. Uracil is bound by residues Ile-193 and 198–200; that span reads GDA. 5-phospho-alpha-D-ribose 1-diphosphate is bound at residue Asp-199.

Belongs to the UPRTase family. It depends on Mg(2+) as a cofactor.

The catalysed reaction is UMP + diphosphate = 5-phospho-alpha-D-ribose 1-diphosphate + uracil. The protein operates within pyrimidine metabolism; UMP biosynthesis via salvage pathway; UMP from uracil: step 1/1. With respect to regulation, allosterically activated by GTP. Its function is as follows. Catalyzes the conversion of uracil and 5-phospho-alpha-D-ribose 1-diphosphate (PRPP) to UMP and diphosphate. In Corynebacterium urealyticum (strain ATCC 43042 / DSM 7109), this protein is Uracil phosphoribosyltransferase.